The sequence spans 202 residues: Thymidylate kinase (202 aa).

Gly7–Thr14 is an ATP binding site.

Belongs to the thymidylate kinase family.

The enzyme catalyses dTMP + ATP = dTDP + ADP. Phosphorylation of dTMP to form dTDP in both de novo and salvage pathways of dTTP synthesis. The sequence is that of Thymidylate kinase from Ehrlichia ruminantium (strain Gardel).